The chain runs to 173 residues: Shikimate kinase 2 (173 aa).

Residue 12–17 (GCGKTT) coordinates ATP. Mg(2+) is bound by residues Thr16 and Asp32. 3 residues coordinate substrate: Asp34, Arg58, and Gly79. Residues 112–126 (QASPQAHQRPTLTGR) are LID domain. Arg120 contributes to the ATP binding site. Residue Arg139 participates in substrate binding. Gln155 contacts ATP.

Monomer. Requires Mg(2+) as cofactor.

The protein resides in the cytoplasm. It carries out the reaction shikimate + ATP = 3-phosphoshikimate + ADP + H(+). It participates in metabolic intermediate biosynthesis; chorismate biosynthesis; chorismate from D-erythrose 4-phosphate and phosphoenolpyruvate: step 5/7. Inhibited by chloride and sulfate ions. In terms of biological role, catalyzes the specific phosphorylation of the 3-hydroxyl group of shikimic acid using ATP as a cosubstrate. The polypeptide is Shikimate kinase 2 (aroL) (Dickeya chrysanthemi (Pectobacterium chrysanthemi)).